Consider the following 273-residue polypeptide: Protein FAM216A (273 aa).

Residues 1–47 (MLGQLLPHTARGLGAAEMPGQGPGSDWTERSSSAEPPAVAGTEGGGG) are disordered.

This sequence belongs to the FAM216 family.

This chain is Protein FAM216A (FAM216A), found in Homo sapiens (Human).